An 873-amino-acid chain; its full sequence is Leucine--tRNA ligase (873 aa).

A 'HIGH' region motif is present at residues 42–52 (PYPSGKLHMGH). The interval 624–643 (PVEIGGTEKMSKSKNNGVDP) is disordered. Residues 632–636 (KMSKS) carry the 'KMSKS' region motif. K635 is an ATP binding site.

This sequence belongs to the class-I aminoacyl-tRNA synthetase family.

It is found in the cytoplasm. It catalyses the reaction tRNA(Leu) + L-leucine + ATP = L-leucyl-tRNA(Leu) + AMP + diphosphate. This is Leucine--tRNA ligase from Pseudomonas aeruginosa (strain LESB58).